The chain runs to 436 residues: Trigger factor (436 aa).

Residues 161–246 (GDQLNIDFVG…VNSVSAPQLP (86 aa)) enclose the PPIase FKBP-type domain.

This sequence belongs to the FKBP-type PPIase family. Tig subfamily.

It is found in the cytoplasm. It carries out the reaction [protein]-peptidylproline (omega=180) = [protein]-peptidylproline (omega=0). Its function is as follows. Involved in protein export. Acts as a chaperone by maintaining the newly synthesized protein in an open conformation. Functions as a peptidyl-prolyl cis-trans isomerase. In Ectopseudomonas mendocina (strain ymp) (Pseudomonas mendocina), this protein is Trigger factor.